A 313-amino-acid polypeptide reads, in one-letter code: Protein TIC 22-like, chloroplastic (313 aa).

A chloroplast-targeting transit peptide spans 1–96; sequence MNSNIFPPSK…RISDDGGGAR (96 aa).

It belongs to the Tic22 family.

The protein resides in the plastid. It is found in the chloroplast intermembrane space. Its function is as follows. Involved in protein precursor import into chloroplasts. The sequence is that of Protein TIC 22-like, chloroplastic (TIC22L) from Arabidopsis thaliana (Mouse-ear cress).